The chain runs to 547 residues: Glucose-6-phosphate isomerase 1 (547 aa).

Glu-353 functions as the Proton donor in the catalytic mechanism. Residues His-384 and Lys-512 contribute to the active site.

The protein belongs to the GPI family.

It is found in the cytoplasm. The enzyme catalyses alpha-D-glucose 6-phosphate = beta-D-fructose 6-phosphate. It participates in carbohydrate biosynthesis; gluconeogenesis. It functions in the pathway carbohydrate degradation; glycolysis; D-glyceraldehyde 3-phosphate and glycerone phosphate from D-glucose: step 2/4. Its function is as follows. Catalyzes the reversible isomerization of glucose-6-phosphate to fructose-6-phosphate. In Chromobacterium violaceum (strain ATCC 12472 / DSM 30191 / JCM 1249 / CCUG 213 / NBRC 12614 / NCIMB 9131 / NCTC 9757 / MK), this protein is Glucose-6-phosphate isomerase 1.